A 199-amino-acid polypeptide reads, in one-letter code: Large ribosomal subunit protein bL25 (199 aa).

Belongs to the bacterial ribosomal protein bL25 family. CTC subfamily. Part of the 50S ribosomal subunit; part of the 5S rRNA/L5/L18/L25 subcomplex. Contacts the 5S rRNA. Binds to the 5S rRNA independently of L5 and L18.

This is one of the proteins that binds to the 5S RNA in the ribosome where it forms part of the central protuberance. This chain is Large ribosomal subunit protein bL25, found in Nostoc punctiforme (strain ATCC 29133 / PCC 73102).